A 265-amino-acid polypeptide reads, in one-letter code: Shikimate dehydrogenase (NADP(+)) (265 aa).

Residues 15–17 and T62 each bind shikimate; that span reads SLS. K66 functions as the Proton acceptor in the catalytic mechanism. Position 78 (E78) interacts with NADP(+). Shikimate contacts are provided by N87 and D102. Residues 126-130, 150-155, and V210 each bind NADP(+); these read GAGGV and NRTELK. Residue Y212 participates in shikimate binding. G233 serves as a coordination point for NADP(+).

The protein belongs to the shikimate dehydrogenase family. As to quaternary structure, homodimer.

The enzyme catalyses shikimate + NADP(+) = 3-dehydroshikimate + NADPH + H(+). Its pathway is metabolic intermediate biosynthesis; chorismate biosynthesis; chorismate from D-erythrose 4-phosphate and phosphoenolpyruvate: step 4/7. In terms of biological role, involved in the biosynthesis of the chorismate, which leads to the biosynthesis of aromatic amino acids. Catalyzes the reversible NADPH linked reduction of 3-dehydroshikimate (DHSA) to yield shikimate (SA). This chain is Shikimate dehydrogenase (NADP(+)), found in Pelagibacter ubique (strain HTCC1062).